A 318-amino-acid polypeptide reads, in one-letter code: Aspartate carbamoyltransferase catalytic subunit (318 aa).

2 residues coordinate carbamoyl phosphate: arginine 58 and threonine 59. Residue lysine 86 coordinates L-aspartate. Carbamoyl phosphate is bound by residues arginine 108, histidine 141, and glutamine 144. Residues arginine 174 and arginine 226 each coordinate L-aspartate. Carbamoyl phosphate is bound by residues glycine 270 and proline 271.

Belongs to the aspartate/ornithine carbamoyltransferase superfamily. ATCase family. As to quaternary structure, heterododecamer (2C3:3R2) of six catalytic PyrB chains organized as two trimers (C3), and six regulatory PyrI chains organized as three dimers (R2).

The catalysed reaction is carbamoyl phosphate + L-aspartate = N-carbamoyl-L-aspartate + phosphate + H(+). Its pathway is pyrimidine metabolism; UMP biosynthesis via de novo pathway; (S)-dihydroorotate from bicarbonate: step 2/3. In terms of biological role, catalyzes the condensation of carbamoyl phosphate and aspartate to form carbamoyl aspartate and inorganic phosphate, the committed step in the de novo pyrimidine nucleotide biosynthesis pathway. The sequence is that of Aspartate carbamoyltransferase catalytic subunit from Lactobacillus delbrueckii subsp. bulgaricus (strain ATCC BAA-365 / Lb-18).